A 93-amino-acid chain; its full sequence is Small ribosomal subunit protein uS19c (93 aa).

It belongs to the universal ribosomal protein uS19 family.

Its subcellular location is the plastid. The protein localises to the chloroplast. In terms of biological role, protein S19 forms a complex with S13 that binds strongly to the 16S ribosomal RNA. The protein is Small ribosomal subunit protein uS19c of Ipomoea purpurea (Common morning glory).